Here is a 357-residue protein sequence, read N- to C-terminus: Vomeronasal type-1 receptor 5 (357 aa).

Residues 1–3 (MLK) lie on the Extracellular side of the membrane. Residues 4–24 (LVIIENMAEIMLFSLDLLLFS) traverse the membrane as a helical segment. The Cytoplasmic segment spans residues 25–52 (TDILCFNFPSKMIKLPGFITIQIFFYPQ). A helical transmembrane segment spans residues 53 to 73 (ASFGISANTILLLFHIFTFVF). Topologically, residues 74–81 (SHRSKSID) are extracellular. The helical transmembrane segment at 82-102 (MIISHLSLIHILLLFTQAILV) threads the bilayer. Topologically, residues 103–130 (SLDFFGSQNTQDDLRYKVIVFLNKVMRG) are cytoplasmic. A helical transmembrane segment spans residues 131–151 (LSICTPCLLSVLQAIISPSIF). Over 152 to 163 (SLAKLKHPSASH) the chain is Extracellular. A helical transmembrane segment spans residues 164 to 184 (ILGFFLFSWVLNMFIGVIFCC). Residues 185 to 269 (TLRLPPVKRG…RVSPVKRASQ (85 aa)) lie on the Cytoplasmic side of the membrane. Residues 270–290 (AILLLVSFVFTYWVDFTFSFS) form a helical membrane-spanning segment. The Extracellular segment spans residues 291–300 (GGVTWINDSL). Residue Asn297 is glycosylated (N-linked (GlcNAc...) asparagine). A helical membrane pass occupies residues 301–321 (LVWLQVIVANSYAAISPLMLI). The Cytoplasmic portion of the chain corresponds to 322–357 (YADNQIFKTLQMLWFKYLSPPKLMLKFNRQCGSTKK).

Belongs to the G-protein coupled receptor 1 family.

The protein resides in the cell membrane. Functionally, putative pheromone receptor. The sequence is that of Vomeronasal type-1 receptor 5 (VN1R5) from Homo sapiens (Human).